A 208-amino-acid chain; its full sequence is NAD(P)H-quinone oxidoreductase subunit I (208 aa).

4Fe-4S ferredoxin-type domains lie at 55–84 and 95–124; these read GRIH…VDWV and RNYS…MTEE. [4Fe-4S] cluster-binding residues include Cys-64, Cys-67, Cys-70, Cys-74, Cys-104, Cys-107, Cys-110, and Cys-114.

It belongs to the complex I 23 kDa subunit family. As to quaternary structure, NDH-1 is composed of at least 11 different subunits. It depends on [4Fe-4S] cluster as a cofactor.

The protein resides in the cellular thylakoid membrane. The enzyme catalyses a plastoquinone + NADH + (n+1) H(+)(in) = a plastoquinol + NAD(+) + n H(+)(out). It catalyses the reaction a plastoquinone + NADPH + (n+1) H(+)(in) = a plastoquinol + NADP(+) + n H(+)(out). In terms of biological role, NDH-1 shuttles electrons from an unknown electron donor, via FMN and iron-sulfur (Fe-S) centers, to quinones in the respiratory and/or the photosynthetic chain. The immediate electron acceptor for the enzyme in this species is believed to be plastoquinone. Couples the redox reaction to proton translocation, and thus conserves the redox energy in a proton gradient. The polypeptide is NAD(P)H-quinone oxidoreductase subunit I (Prochlorococcus marinus (strain MIT 9312)).